The following is a 474-amino-acid chain: Trigger factor (474 aa).

The PPIase FKBP-type domain occupies 165–250 (GDRVTIDYLG…VKTVSKPDEL (86 aa)). Basic and acidic residues predominate over residues 451–467 (VKKKTASDNKKSNEIKK). A disordered region spans residues 451–474 (VKKKTASDNKKSNEIKKKSTMKKV).

Belongs to the FKBP-type PPIase family. Tig subfamily.

The protein resides in the cytoplasm. The catalysed reaction is [protein]-peptidylproline (omega=180) = [protein]-peptidylproline (omega=0). Functionally, involved in protein export. Acts as a chaperone by maintaining the newly synthesized protein in an open conformation. Functions as a peptidyl-prolyl cis-trans isomerase. The chain is Trigger factor from Bartonella bacilliformis (strain ATCC 35685 / KC583 / Herrer 020/F12,63).